The sequence spans 972 residues: Glycine dehydrogenase (decarboxylating) (972 aa).

The residue at position 713 (Lys-713) is an N6-(pyridoxal phosphate)lysine.

Belongs to the GcvP family. The glycine cleavage system is composed of four proteins: P, T, L and H. Pyridoxal 5'-phosphate is required as a cofactor.

The enzyme catalyses N(6)-[(R)-lipoyl]-L-lysyl-[glycine-cleavage complex H protein] + glycine + H(+) = N(6)-[(R)-S(8)-aminomethyldihydrolipoyl]-L-lysyl-[glycine-cleavage complex H protein] + CO2. In terms of biological role, the glycine cleavage system catalyzes the degradation of glycine. The P protein binds the alpha-amino group of glycine through its pyridoxal phosphate cofactor; CO(2) is released and the remaining methylamine moiety is then transferred to the lipoamide cofactor of the H protein. The polypeptide is Glycine dehydrogenase (decarboxylating) (Aromatoleum aromaticum (strain DSM 19018 / LMG 30748 / EbN1) (Azoarcus sp. (strain EbN1))).